Consider the following 130-residue polypeptide: Small ribosomal subunit protein uS9 (130 aa).

Residues 99 to 130 form a disordered region; sequence KSAGMLTRDPRMKERKKPGLKKARKASQFSKR. Over residues 111-130 the composition is skewed to basic residues; the sequence is KERKKPGLKKARKASQFSKR.

It belongs to the universal ribosomal protein uS9 family.

This chain is Small ribosomal subunit protein uS9, found in Latilactobacillus sakei subsp. sakei (strain 23K) (Lactobacillus sakei subsp. sakei).